Consider the following 425-residue polypeptide: DNA replication and repair protein RecF (425 aa).

30–37 serves as a coordination point for ATP; the sequence is GPNGHGKT.

This sequence belongs to the RecF family.

The protein resides in the cytoplasm. In terms of biological role, the RecF protein is involved in DNA metabolism; it is required for DNA replication and normal SOS inducibility. RecF binds preferentially to single-stranded, linear DNA. It also seems to bind ATP. This Corynebacterium jeikeium (strain K411) protein is DNA replication and repair protein RecF.